The following is a 174-amino-acid chain: Probable carboxylesterase Culp5 (174 aa).

S67 serves as the catalytic Nucleophile. A disulfide bridge connects residues C137 and C144. The active site involves D141. Residue H153 is the Proton donor/acceptor of the active site.

Belongs to the cutinase family.

Does not exhibit cutinase activity. The sequence is that of Probable carboxylesterase Culp5 from Mycobacterium tuberculosis (strain ATCC 25618 / H37Rv).